The primary structure comprises 443 residues: Ribulose bisphosphate carboxylase large chain (443 aa).

Substrate contacts are provided by Asn-89 and Thr-139. Residue Lys-141 is the Proton acceptor of the active site. Position 143 (Lys-143) interacts with substrate. Residues Lys-167, Asp-169, and Glu-170 each coordinate Mg(2+). Lys-167 carries the post-translational modification N6-carboxylysine. His-260 functions as the Proton acceptor in the catalytic mechanism. Residues Arg-261, His-293, and Ser-345 each contribute to the substrate site.

Belongs to the RuBisCO large chain family. Type I subfamily. As to quaternary structure, heterohexadecamer of 8 large chains and 8 small chains; disulfide-linked. The disulfide link is formed within the large subunit homodimers. Mg(2+) is required as a cofactor. Post-translationally, the disulfide bond which can form in the large chain dimeric partners within the hexadecamer appears to be associated with oxidative stress and protein turnover.

The protein localises to the plastid. The protein resides in the chloroplast. The catalysed reaction is 2 (2R)-3-phosphoglycerate + 2 H(+) = D-ribulose 1,5-bisphosphate + CO2 + H2O. It carries out the reaction D-ribulose 1,5-bisphosphate + O2 = 2-phosphoglycolate + (2R)-3-phosphoglycerate + 2 H(+). In terms of biological role, ruBisCO catalyzes two reactions: the carboxylation of D-ribulose 1,5-bisphosphate, the primary event in carbon dioxide fixation, as well as the oxidative fragmentation of the pentose substrate in the photorespiration process. Both reactions occur simultaneously and in competition at the same active site. The chain is Ribulose bisphosphate carboxylase large chain from Callitriche heterophylla (Large water-starwort).